A 196-amino-acid polypeptide reads, in one-letter code: Rac-like GTP-binding protein RAC13 (196 aa).

13-20 serves as a coordination point for GTP; it reads GDGAVGKT. The Effector region signature appears at 35–43; it reads YVPTVFDNF. GTP-binding positions include 60-64 and 118-121; these read DTAGQ and TKLD. C193 carries the cysteine methyl ester modification. C193 is lipidated: S-geranylgeranyl cysteine. The propeptide at 194–196 is removed in mature form; that stretch reads AFL.

It belongs to the small GTPase superfamily. Rho family.

The protein localises to the cytoplasm. It localises to the membrane. Functionally, could participate in a signal transduction pathway that controls cytoskeletal organization. In terms of biological role, inactive GDP-bound Rho GTPases reside in the cytosol, are found in a complex with Rho GDP-dissociation inhibitors (Rho GDIs), and are released from the GDI protein in order to translocate to membranes upon activation. In Gossypium hirsutum (Upland cotton), this protein is Rac-like GTP-binding protein RAC13 (RAC13).